A 250-amino-acid chain; its full sequence is 1-(5-phosphoribosyl)-5-[(5-phosphoribosylamino)methylideneamino] imidazole-4-carboxamide isomerase (250 aa).

Catalysis depends on D8, which acts as the Proton acceptor. Residue D131 is the Proton donor of the active site.

It belongs to the HisA/HisF family.

It is found in the cytoplasm. It carries out the reaction 1-(5-phospho-beta-D-ribosyl)-5-[(5-phospho-beta-D-ribosylamino)methylideneamino]imidazole-4-carboxamide = 5-[(5-phospho-1-deoxy-D-ribulos-1-ylimino)methylamino]-1-(5-phospho-beta-D-ribosyl)imidazole-4-carboxamide. It participates in amino-acid biosynthesis; L-histidine biosynthesis; L-histidine from 5-phospho-alpha-D-ribose 1-diphosphate: step 4/9. This is 1-(5-phosphoribosyl)-5-[(5-phosphoribosylamino)methylideneamino] imidazole-4-carboxamide isomerase from Paraburkholderia phytofirmans (strain DSM 17436 / LMG 22146 / PsJN) (Burkholderia phytofirmans).